The following is a 116-amino-acid chain: Phosphoribosyl-AMP cyclohydrolase (116 aa).

Mg(2+) is bound at residue aspartate 80. Cysteine 81 contacts Zn(2+). Residues aspartate 82 and aspartate 84 each coordinate Mg(2+). Zn(2+)-binding residues include cysteine 98 and cysteine 105.

It belongs to the PRA-CH family. Homodimer. It depends on Mg(2+) as a cofactor. Zn(2+) is required as a cofactor.

The protein localises to the cytoplasm. The catalysed reaction is 1-(5-phospho-beta-D-ribosyl)-5'-AMP + H2O = 1-(5-phospho-beta-D-ribosyl)-5-[(5-phospho-beta-D-ribosylamino)methylideneamino]imidazole-4-carboxamide. The protein operates within amino-acid biosynthesis; L-histidine biosynthesis; L-histidine from 5-phospho-alpha-D-ribose 1-diphosphate: step 3/9. In terms of biological role, catalyzes the hydrolysis of the adenine ring of phosphoribosyl-AMP. This chain is Phosphoribosyl-AMP cyclohydrolase, found in Trichormus variabilis (strain ATCC 29413 / PCC 7937) (Anabaena variabilis).